The chain runs to 120 residues: Peptidyl-tRNA hydrolase (120 aa).

This sequence belongs to the PTH2 family.

The protein localises to the cytoplasm. The enzyme catalyses an N-acyl-L-alpha-aminoacyl-tRNA + H2O = an N-acyl-L-amino acid + a tRNA + H(+). The natural substrate for this enzyme may be peptidyl-tRNAs which drop off the ribosome during protein synthesis. This Sulfolobus acidocaldarius (strain ATCC 33909 / DSM 639 / JCM 8929 / NBRC 15157 / NCIMB 11770) protein is Peptidyl-tRNA hydrolase.